A 94-amino-acid chain; its full sequence is Integration host factor subunit beta (94 aa).

Belongs to the bacterial histone-like protein family. In terms of assembly, heterodimer of an alpha and a beta chain.

Its function is as follows. This protein is one of the two subunits of integration host factor, a specific DNA-binding protein that functions in genetic recombination as well as in transcriptional and translational control. This chain is Integration host factor subunit beta, found in Salmonella arizonae (strain ATCC BAA-731 / CDC346-86 / RSK2980).